A 211-amino-acid polypeptide reads, in one-letter code: Thymidylate kinase (211 aa).

11–18 (GPDGAGKT) is an ATP binding site.

Belongs to the thymidylate kinase family.

It catalyses the reaction dTMP + ATP = dTDP + ADP. Phosphorylation of dTMP to form dTDP in both de novo and salvage pathways of dTTP synthesis. This chain is Thymidylate kinase, found in Streptococcus pyogenes serotype M1.